We begin with the raw amino-acid sequence, 180 residues long: ADP-ribosylation factor-like protein 1 (180 aa).

Gly2 carries the N-myristoyl glycine lipid modification. Residues 23-30 (GLDGAGKT), 66-70 (DLGGQ), and 125-128 (NKQD) each bind GTP.

It belongs to the small GTPase superfamily. Arf family.

In terms of biological role, GTP-binding protein involved in protein trafficking; may modulate vesicle budding and uncoating within the Golgi apparatus. The protein is ADP-ribosylation factor-like protein 1 (Arl1) of Drosophila melanogaster (Fruit fly).